A 160-amino-acid polypeptide reads, in one-letter code: Ribosome maturation factor RimP (160 aa).

It belongs to the RimP family.

It localises to the cytoplasm. Functionally, required for maturation of 30S ribosomal subunits. This chain is Ribosome maturation factor RimP, found in Symbiobacterium thermophilum (strain DSM 24528 / JCM 14929 / IAM 14863 / T).